We begin with the raw amino-acid sequence, 201 residues long: MTEKAPEPHVEEDDDDELDSKLNYKPPPQKSLKELQEMDKDDESLIKYKKTLLGDGPVVTDPKAPNVVVTRLTLVCESAPGPITMDLTGDLEALKKETIVLKEGSEYRVKIHFKVNRDIVSGLKYVQHTYRTGVKVDKATFMVGSYGPRPEEYEFLTPVEEAPKGMLARGTYHNKSFFTDDDKQDHLSWEWNLSIKKEWTE.

The interval 1 to 38 (MTEKAPEPHVEEDDDDELDSKLNYKPPPQKSLKELQEM) is disordered. An N-acetylthreonine modification is found at threonine 2. The residue at position 21 (lysine 21) is an N6-acetyllysine. Tyrosine 24 carries the post-translational modification Phosphotyrosine. N6-acetyllysine occurs at positions 25, 40, 47, 102, and 124. Serine 145 is subject to Phosphoserine. At lysine 175 the chain carries N6-acetyllysine.

The protein belongs to the Rho GDI family. Interacts with RHOA. Interacts with RAC1. Interacts with RAC2. Interacts with CDC42. Detected in bone marrow, thymus and spleen.

Its subcellular location is the cytoplasm. The protein localises to the cytosol. In terms of biological role, regulates the GDP/GTP exchange reaction of the Rho proteins by inhibiting the dissociation of GDP from them, and the subsequent binding of GTP to them. Regulates reorganization of the actin cytoskeleton mediated by Rho family members. The polypeptide is Rho GDP-dissociation inhibitor 2 (ARHGDIB) (Homo sapiens (Human)).